The following is a 73-amino-acid chain: MVSIRLTFALAIVAIIFAFSVDAAYKKPPFNGSIFGKRSNTMTDYEFTSRALSAICEVASETCTAWMSRQESN.

The first 23 residues, methionine 1–alanine 23, serve as a signal peptide directing secretion. Phenylalanine 35 carries the post-translational modification Phenylalanine amide. The propeptide occupies serine 39–asparagine 73.

Expressed in brain, the retrocerebral complex and in ventral, thoracic and abdominal ganglia (at protein level).

It is found in the secreted. The sequence is that of SIFamide-related peptide from Camponotus floridanus (Florida carpenter ant).